The sequence spans 527 residues: DNA polymerase epsilon subunit 2 (527 aa).

It belongs to the DNA polymerase epsilon subunit B family. In terms of assembly, component of the DNA polymerase epsilon complex consisting of four subunits: the catalytic subunit POLE and the accessory subunits POLE2, POLE3 and POLE4.

The protein resides in the nucleus. Accessory component of the DNA polymerase epsilon complex. Participates in DNA repair and in chromosomal DNA replication. The chain is DNA polymerase epsilon subunit 2 (POLE2) from Bos taurus (Bovine).